Reading from the N-terminus, the 363-residue chain is 3-isopropylmalate dehydrogenase A (363 aa).

Glycine 78–glutamate 89 serves as a coordination point for NAD(+). Residues arginine 96, arginine 106, arginine 135, and aspartate 222 each contribute to the substrate site. Residues aspartate 222, aspartate 247, and aspartate 251 each contribute to the Mg(2+) site. Residue glycine 287–asparagine 299 coordinates NAD(+).

This sequence belongs to the isocitrate and isopropylmalate dehydrogenases family. As to quaternary structure, homodimer. Mg(2+) serves as cofactor. It depends on Mn(2+) as a cofactor.

The protein resides in the cytoplasm. It carries out the reaction (2R,3S)-3-isopropylmalate + NAD(+) = 4-methyl-2-oxopentanoate + CO2 + NADH. It functions in the pathway amino-acid biosynthesis; L-leucine biosynthesis; L-leucine from 3-methyl-2-oxobutanoate: step 3/4. Catalyzes the oxidation of 3-carboxy-2-hydroxy-4-methylpentanoate (3-isopropylmalate) to 3-carboxy-4-methyl-2-oxopentanoate. The product decarboxylates to 4-methyl-2 oxopentanoate. In Aspergillus niger, this protein is 3-isopropylmalate dehydrogenase A (leu2A).